The chain runs to 345 residues: Microtubule-associated protein Jupiter (345 aa).

Residues 1–14 show a composition bias toward polar residues; it reads MISNFDCTDNQASS. The segment at 1 to 34 is disordered; it reads MISNFDCTDNQASSKVLRPPGGGSSDIFGSEMPQ. S24 is subject to Phosphoserine. Phosphothreonine is present on T35. Residues 78–87 show a composition bias toward basic and acidic residues; it reads QKTVDSHNRL. The tract at residues 78-100 is disordered; it reads QKTVDSHNRLFGEPTRPITPGKN. T92 and T96 each carry phosphothreonine. A phosphoserine mark is found at S105, S134, and S145. 2 disordered regions span residues 127–241 and 300–345; these read HYNG…QPHS and EGNP…SGLW. A compositionally biased stretch (low complexity) spans 132–145; the sequence is SGSVSSASSSVSSS. The span at 146–164 shows a compositional bias: polar residues; sequence TENLKMNSGSRSVFRNMST. The span at 177–191 shows a compositional bias: pro residues; the sequence is LCPPSPVRIEPPTPP. 2 stretches are compositionally biased toward polar residues: residues 212–226 and 315–326; these read DNSTYTKSDQVNEAC and DYNQRQESSNAG.

The protein belongs to the MAP Jupiter family.

It localises to the nucleus. Its subcellular location is the cytoplasm. The protein localises to the cytoskeleton. The protein resides in the spindle. Binds to all microtubule populations. This Drosophila erecta (Fruit fly) protein is Microtubule-associated protein Jupiter.